The sequence spans 211 residues: Ribosomal RNA small subunit methyltransferase G (211 aa).

S-adenosyl-L-methionine is bound by residues Gly-79, Leu-84, 130-131 (VE), and Arg-145.

Belongs to the methyltransferase superfamily. RNA methyltransferase RsmG family.

The protein resides in the cytoplasm. The enzyme catalyses guanosine(527) in 16S rRNA + S-adenosyl-L-methionine = N(7)-methylguanosine(527) in 16S rRNA + S-adenosyl-L-homocysteine. Specifically methylates the N7 position of guanine in position 527 of 16S rRNA. This Alteromonas mediterranea (strain DSM 17117 / CIP 110805 / LMG 28347 / Deep ecotype) protein is Ribosomal RNA small subunit methyltransferase G.